A 474-amino-acid chain; its full sequence is Stabilizer of axonemal microtubules 1 (474 aa).

12 mn regions span residues 30-64, 65-97, 98-131, 132-165, 166-199, 200-232, 233-266, 267-299, 300-332, 333-366, 367-400, and 401-434; these read KPCL…KGPI, PMEG…PSEE, NMDL…PCSD, KMEC…PASV, RFDN…LCNI, PLED…PCEI, PFES…GLDM, PFCN…PPED, RMDL…KKCG, RFEG…LPTE, PLDC…RGNV, and PVES…TFEE. Positions 446-474 are disordered; sequence VSQAGSQQSSHLSVDDSENPNQRELEVLA. Residues 448-457 show a composition bias toward polar residues; the sequence is QAGSQQSSHL.

This sequence belongs to the FAM154 family. In terms of assembly, associates with microtubules via the Mn regions. As to expression, widely expressed, with highest levels in testis. Expressed in mature spermatozoa (at protein level).

The protein localises to the cytoplasm. It is found in the cytoskeleton. The protein resides in the microtubule organizing center. Its subcellular location is the centrosome. It localises to the centriole. The protein localises to the cilium basal body. It is found in the cilium axoneme. The protein resides in the flagellum axoneme. Its function is as follows. May play a role in the regulation of cilium length. Stabilizes microtubules at low temperature. The sequence is that of Stabilizer of axonemal microtubules 1 (SAXO1) from Homo sapiens (Human).